The chain runs to 705 residues: Prolyl endopeptidase (705 aa).

Positions 1–20 (MKYKKLSVAVAAFAFAAVSA) are cleaved as a signal peptide. Residues serine 556 and histidine 675 each act as charge relay system in the active site.

It belongs to the peptidase S9A family. In terms of assembly, monomer.

It localises to the periplasm. The catalysed reaction is Hydrolysis of Pro-|-Xaa &gt;&gt; Ala-|-Xaa in oligopeptides.. In terms of biological role, cleaves peptide bonds on the C-terminal side of prolyl residues within peptides that are up to approximately 30 amino acids long. Has an absolute requirement for an X-Pro bond in the trans configuration immediately preceding the Pro-Y scissible bond. This Elizabethkingia miricola (Chryseobacterium miricola) protein is Prolyl endopeptidase.